A 302-amino-acid chain; its full sequence is Thioredoxin-like protein CDSP32, chloroplastic (302 aa).

The N-terminal 56 residues, 1 to 56, are a transit peptide targeting the chloroplast; it reads MATVANFLAKPISTVVPRPSSAVASTSSFVFFNHKTNPLFRRKNLPKRLFSAVKIK. Residues 163–298 form the Thioredoxin domain; it reads HEEEGIEPDQ…IGEILRYSGV (136 aa). Residues Cys-219 and Cys-222 each act as nucleophile in the active site. A disulfide bridge links Cys-219 with Cys-222.

Belongs to the thioredoxin family. Interacts with the plastidial peroxiredoxin BAS1.

It is found in the plastid. The protein localises to the chloroplast stroma. Probable thiol-disulfide oxidoreductase involved in resistance to oxidative stress. May participate in the reduction of alkyl hydroperoxides derived from oxidative stress by acting as a physiological electron donor to the BAS1 peroxiredoxin. May regenerate methionine sulfoxide reductase B1 (MSRB1) activity through sulfenic acid reduction. The polypeptide is Thioredoxin-like protein CDSP32, chloroplastic (CDSP32) (Arabidopsis thaliana (Mouse-ear cress)).